Reading from the N-terminus, the 328-residue chain is Tetraacyldisaccharide 4'-kinase (328 aa).

An ATP-binding site is contributed by 55–62 (TAGGNGKT).

Belongs to the LpxK family.

The enzyme catalyses a lipid A disaccharide + ATP = a lipid IVA + ADP + H(+). It functions in the pathway glycolipid biosynthesis; lipid IV(A) biosynthesis; lipid IV(A) from (3R)-3-hydroxytetradecanoyl-[acyl-carrier-protein] and UDP-N-acetyl-alpha-D-glucosamine: step 6/6. Functionally, transfers the gamma-phosphate of ATP to the 4'-position of a tetraacyldisaccharide 1-phosphate intermediate (termed DS-1-P) to form tetraacyldisaccharide 1,4'-bis-phosphate (lipid IVA). This Escherichia coli O7:K1 (strain IAI39 / ExPEC) protein is Tetraacyldisaccharide 4'-kinase.